Consider the following 348-residue polypeptide: Mannonate dehydratase (348 aa).

It belongs to the mannonate dehydratase family. Fe(2+) serves as cofactor. Mn(2+) is required as a cofactor.

It carries out the reaction D-mannonate = 2-dehydro-3-deoxy-D-gluconate + H2O. It functions in the pathway carbohydrate metabolism; pentose and glucuronate interconversion. Its function is as follows. Catalyzes the dehydration of D-mannonate. This chain is Mannonate dehydratase, found in Streptococcus agalactiae serotype V (strain ATCC BAA-611 / 2603 V/R).